Consider the following 429-residue polypeptide: Endo-1,4-beta-xylanase 1 (429 aa).

A signal peptide spans 1-19; that stretch reads MQTKSILTAALLAAAPASA. The GH10 domain occupies 43–336; sequence NSDQQYNRIL…KPAWTSISSV (294 aa). Glutamate 150 functions as the Proton donor in the catalytic mechanism. Glutamate 257 acts as the Nucleophile in catalysis. The cysteines at positions 286 and 292 are disulfide-linked. A disordered region spans residues 364 to 395; that stretch reads TTPPPISSPIVPSTTTTSAVPTTTVSPPEPEQ. Residues 371–389 show a composition bias toward low complexity; that stretch reads SPIVPSTTTTSAVPTTTVS. One can recognise a CBM1 domain in the interval 393–429; it reads PEQTRWGQCGGIGWNGPTKCQSPWTCTRLNDWYFQCL.

It belongs to the glycosyl hydrolase 10 (cellulase F) family.

The protein localises to the secreted. The enzyme catalyses Endohydrolysis of (1-&gt;4)-beta-D-xylosidic linkages in xylans.. The protein operates within glycan degradation; xylan degradation. In terms of biological role, endo-1,4-beta-xylanase involved in the hydrolysis of xylan, a major structural heterogeneous polysaccharide found in plant biomass representing the second most abundant polysaccharide in the biosphere, after cellulose. The chain is Endo-1,4-beta-xylanase 1 from Humicola insolens (Soft-rot fungus).